Here is a 368-residue protein sequence, read N- to C-terminus: 3-dehydroquinate synthase (368 aa).

NAD(+) contacts are provided by residues 71–76, 105–109, 129–130, K142, K151, and 169–172; these read DGEAFK, GVVGD, TT, and TLRT. E184, H247, and H264 together coordinate Zn(2+).

Belongs to the sugar phosphate cyclases superfamily. Dehydroquinate synthase family. It depends on Co(2+) as a cofactor. The cofactor is Zn(2+). Requires NAD(+) as cofactor.

It is found in the cytoplasm. It catalyses the reaction 7-phospho-2-dehydro-3-deoxy-D-arabino-heptonate = 3-dehydroquinate + phosphate. The protein operates within metabolic intermediate biosynthesis; chorismate biosynthesis; chorismate from D-erythrose 4-phosphate and phosphoenolpyruvate: step 2/7. Catalyzes the conversion of 3-deoxy-D-arabino-heptulosonate 7-phosphate (DAHP) to dehydroquinate (DHQ). This Cupriavidus necator (strain ATCC 17699 / DSM 428 / KCTC 22496 / NCIMB 10442 / H16 / Stanier 337) (Ralstonia eutropha) protein is 3-dehydroquinate synthase.